A 156-amino-acid polypeptide reads, in one-letter code: ATP synthase subunit b (156 aa).

The chain crosses the membrane as a helical span at residues Ile-5–Pro-27.

This sequence belongs to the ATPase B chain family. As to quaternary structure, F-type ATPases have 2 components, F(1) - the catalytic core - and F(0) - the membrane proton channel. F(1) has five subunits: alpha(3), beta(3), gamma(1), delta(1), epsilon(1). F(0) has three main subunits: a(1), b(2) and c(10-14). The alpha and beta chains form an alternating ring which encloses part of the gamma chain. F(1) is attached to F(0) by a central stalk formed by the gamma and epsilon chains, while a peripheral stalk is formed by the delta and b chains.

The protein resides in the cell inner membrane. In terms of biological role, f(1)F(0) ATP synthase produces ATP from ADP in the presence of a proton or sodium gradient. F-type ATPases consist of two structural domains, F(1) containing the extramembraneous catalytic core and F(0) containing the membrane proton channel, linked together by a central stalk and a peripheral stalk. During catalysis, ATP synthesis in the catalytic domain of F(1) is coupled via a rotary mechanism of the central stalk subunits to proton translocation. Functionally, component of the F(0) channel, it forms part of the peripheral stalk, linking F(1) to F(0). The sequence is that of ATP synthase subunit b from Francisella tularensis subsp. tularensis (strain SCHU S4 / Schu 4).